The following is a 278-amino-acid chain: Bis(5'-nucleosyl)-tetraphosphatase, symmetrical (278 aa).

Belongs to the Ap4A hydrolase family.

It carries out the reaction P(1),P(4)-bis(5'-adenosyl) tetraphosphate + H2O = 2 ADP + 2 H(+). Its function is as follows. Hydrolyzes diadenosine 5',5'''-P1,P4-tetraphosphate to yield ADP. This chain is Bis(5'-nucleosyl)-tetraphosphatase, symmetrical, found in Buchnera aphidicola subsp. Baizongia pistaciae (strain Bp).